The following is a 185-amino-acid chain: Probable NEDD8-conjugating enzyme Ubc12-like (185 aa).

Residues Lys8–Gln29 form a disordered region. Residues Gln16–Lys28 show a composition bias toward polar residues. One can recognise a UBC core domain in the interval Ala31–Val176. Cys114 acts as the Glycyl thioester intermediate in catalysis.

It belongs to the ubiquitin-conjugating enzyme family. UBC12 subfamily.

It participates in protein modification; protein neddylation. Accepts the ubiquitin-like protein NEDD8/RUB1 from the ECR1-AXR1 E1 complex and catalyzes its covalent attachment to other proteins. The protein is Probable NEDD8-conjugating enzyme Ubc12-like (RCE2) of Arabidopsis thaliana (Mouse-ear cress).